Reading from the N-terminus, the 147-residue chain is Ribosome maturation factor RimP (147 aa).

The protein belongs to the RimP family.

The protein localises to the cytoplasm. Required for maturation of 30S ribosomal subunits. This is Ribosome maturation factor RimP from Legionella pneumophila (strain Paris).